A 420-amino-acid chain; its full sequence is Glucose-1-phosphate adenylyltransferase (420 aa).

Alpha-D-glucose 1-phosphate is bound by residues Tyr107, Gly172, 187–188 (EK), and Ser205.

It belongs to the bacterial/plant glucose-1-phosphate adenylyltransferase family. In terms of assembly, homotetramer.

The catalysed reaction is alpha-D-glucose 1-phosphate + ATP + H(+) = ADP-alpha-D-glucose + diphosphate. The protein operates within glycan biosynthesis; glycogen biosynthesis. Functionally, involved in the biosynthesis of ADP-glucose, a building block required for the elongation reactions to produce glycogen. Catalyzes the reaction between ATP and alpha-D-glucose 1-phosphate (G1P) to produce pyrophosphate and ADP-Glc. The chain is Glucose-1-phosphate adenylyltransferase from Bradyrhizobium diazoefficiens (strain JCM 10833 / BCRC 13528 / IAM 13628 / NBRC 14792 / USDA 110).